Here is a 286-residue protein sequence, read N- to C-terminus: Putative sugar uptake protein lin0215 (286 aa).

Helical transmembrane passes span 4 to 26 (MIAL…FGGS), 33 to 55 (GMTL…VYTL), 114 to 136 (LRII…TSYA), 149 to 167 (GLIT…VVLI), 177 to 194 (AILP…IMTH), 207 to 226 (LLLI…MVHA), 230 to 252 (VGVA…GGIV), and 264 to 283 (LYVI…IGVA).

It belongs to the GRP transporter (TC 2.A.7.5) family.

Its subcellular location is the cell membrane. In Listeria innocua serovar 6a (strain ATCC BAA-680 / CLIP 11262), this protein is Putative sugar uptake protein lin0215.